The primary structure comprises 325 residues: GTP 3',8-cyclase (325 aa).

The Radical SAM core domain occupies 1–226; sequence MNTVNYLRIS…EGACYGNGPA (226 aa). Residue Arg8 participates in GTP binding. [4Fe-4S] cluster is bound by residues Cys15 and Cys19. Residue Tyr21 participates in S-adenosyl-L-methionine binding. Cys22 contacts [4Fe-4S] cluster. Arg60 serves as a coordination point for GTP. Residue Gly64 participates in S-adenosyl-L-methionine binding. Ser91 is a GTP binding site. Ser115 serves as a coordination point for S-adenosyl-L-methionine. A GTP-binding site is contributed by Lys152. Residue Met186 coordinates S-adenosyl-L-methionine. Cys249 and Cys252 together coordinate [4Fe-4S] cluster. 254 to 256 serves as a coordination point for GTP; it reads RVR. Cys266 serves as a coordination point for [4Fe-4S] cluster.

Belongs to the radical SAM superfamily. MoaA family. In terms of assembly, monomer and homodimer. It depends on [4Fe-4S] cluster as a cofactor.

It carries out the reaction GTP + AH2 + S-adenosyl-L-methionine = (8S)-3',8-cyclo-7,8-dihydroguanosine 5'-triphosphate + 5'-deoxyadenosine + L-methionine + A + H(+). It participates in cofactor biosynthesis; molybdopterin biosynthesis. In terms of biological role, catalyzes the cyclization of GTP to (8S)-3',8-cyclo-7,8-dihydroguanosine 5'-triphosphate. The protein is GTP 3',8-cyclase of Gloeobacter violaceus (strain ATCC 29082 / PCC 7421).